We begin with the raw amino-acid sequence, 220 residues long: ATP-dependent Clp protease proteolytic subunit (220 aa).

Catalysis depends on Ser-125, which acts as the Nucleophile. His-150 is a catalytic residue.

The protein belongs to the peptidase S14 family. As to quaternary structure, fourteen ClpP subunits assemble into 2 heptameric rings which stack back to back to give a disk-like structure with a central cavity, resembling the structure of eukaryotic proteasomes.

It localises to the cytoplasm. The enzyme catalyses Hydrolysis of proteins to small peptides in the presence of ATP and magnesium. alpha-casein is the usual test substrate. In the absence of ATP, only oligopeptides shorter than five residues are hydrolyzed (such as succinyl-Leu-Tyr-|-NHMec, and Leu-Tyr-Leu-|-Tyr-Trp, in which cleavage of the -Tyr-|-Leu- and -Tyr-|-Trp bonds also occurs).. Functionally, cleaves peptides in various proteins in a process that requires ATP hydrolysis. Has a chymotrypsin-like activity. Plays a major role in the degradation of misfolded proteins. The polypeptide is ATP-dependent Clp protease proteolytic subunit (Bacteroides thetaiotaomicron (strain ATCC 29148 / DSM 2079 / JCM 5827 / CCUG 10774 / NCTC 10582 / VPI-5482 / E50)).